Consider the following 102-residue polypeptide: Putative septation protein SpoVG (102 aa).

The disordered stretch occupies residues Thr83–Ala102.

It belongs to the SpoVG family.

Could be involved in septation. This chain is Putative septation protein SpoVG, found in Staphylococcus epidermidis (strain ATCC 35984 / DSM 28319 / BCRC 17069 / CCUG 31568 / BM 3577 / RP62A).